A 560-amino-acid chain; its full sequence is Mannosyl-oligosaccharide 1,2-alpha-mannosidase MNS1 (560 aa).

Residues 1 to 27 (MARSRSISGYGIWKYLNPAYYLRRPRR) lie on the Cytoplasmic side of the membrane. A helical; Signal-anchor for type II membrane protein membrane pass occupies residues 28–47 (LALLFIVFVSVSMLVWDRIN). Residues 47-80 (NLAREHEVEVFKLNEEVSRLEQMLEELNGGVGNK) are a coiled coil. Topologically, residues 48-560 (LAREHEVEVF…QRKFGHQINV (513 aa)) are lumenal. Glu179 acts as the Proton donor in catalysis. Asp312 is a catalytic residue. Residue Asn326 is glycosylated (N-linked (GlcNAc...) asparagine). A disulfide bridge connects residues Cys377 and Cys409. Glu423 functions as the Proton donor in the catalytic mechanism. The active site involves Glu445. A glycan (N-linked (GlcNAc...) asparagine) is linked at Asn459. Thr529 contributes to the Ca(2+) binding site.

The protein belongs to the glycosyl hydrolase 47 family. Ca(2+) is required as a cofactor. Mn(2+) serves as cofactor. It depends on Mg(2+) as a cofactor. As to expression, expressed in flowers, siliques, stems, leaves, roots, pollen grains, shoot apical meristems, hypocotyls and upper region of the root.

It localises to the golgi apparatus membrane. It catalyses the reaction N(4)-(alpha-D-Man-(1-&gt;2)-alpha-D-Man-(1-&gt;2)-alpha-D-Man-(1-&gt;3)-[alpha-D-Man-(1-&gt;2)-alpha-D-Man-(1-&gt;3)-[alpha-D-Man-(1-&gt;2)-alpha-D-Man-(1-&gt;6)]-alpha-D-Man-(1-&gt;6)]-beta-D-Man-(1-&gt;4)-beta-D-GlcNAc-(1-&gt;4)-beta-D-GlcNAc)-L-asparaginyl-[protein] (N-glucan mannose isomer 9A1,2,3B1,2,3) + 4 H2O = N(4)-(alpha-D-Man-(1-&gt;3)-[alpha-D-Man-(1-&gt;3)-[alpha-D-Man-(1-&gt;6)]-alpha-D-Man-(1-&gt;6)]-beta-D-Man-(1-&gt;4)-beta-D-GlcNAc-(1-&gt;4)-beta-D-GlcNAc)-L-asparaginyl-[protein] (N-glucan mannose isomer 5A1,2) + 4 beta-D-mannose. The catalysed reaction is N(4)-(alpha-D-Man-(1-&gt;2)-alpha-D-Man-(1-&gt;2)-alpha-D-Man-(1-&gt;3)-[alpha-D-Man-(1-&gt;3)-[alpha-D-Man-(1-&gt;2)-alpha-D-Man-(1-&gt;6)]-alpha-D-Man-(1-&gt;6)]-beta-D-Man-(1-&gt;4)-beta-D-GlcNAc-(1-&gt;4)-beta-D-GlcNAc)-L-asparaginyl-[protein] (N-glucan mannose isomer 8A1,2,3B1,3) + 3 H2O = N(4)-(alpha-D-Man-(1-&gt;3)-[alpha-D-Man-(1-&gt;3)-[alpha-D-Man-(1-&gt;6)]-alpha-D-Man-(1-&gt;6)]-beta-D-Man-(1-&gt;4)-beta-D-GlcNAc-(1-&gt;4)-beta-D-GlcNAc)-L-asparaginyl-[protein] (N-glucan mannose isomer 5A1,2) + 3 beta-D-mannose. It carries out the reaction N(4)-(alpha-D-Man-(1-&gt;2)-alpha-D-Man-(1-&gt;2)-alpha-D-Man-(1-&gt;3)-[alpha-D-Man-(1-&gt;2)-alpha-D-Man-(1-&gt;3)-[alpha-D-Man-(1-&gt;2)-alpha-D-Man-(1-&gt;6)]-alpha-D-Man-(1-&gt;6)]-beta-D-Man-(1-&gt;4)-beta-D-GlcNAc-(1-&gt;4)-beta-D-GlcNAc)-L-asparaginyl-[protein] (N-glucan mannose isomer 9A1,2,3B1,2,3) + H2O = N(4)-(alpha-D-Man-(1-&gt;2)-alpha-D-Man-(1-&gt;2)-alpha-D-Man-(1-&gt;3)-[alpha-D-Man-(1-&gt;3)-[alpha-D-Man-(1-&gt;2)-alpha-D-Man-(1-&gt;6)]-alpha-D-Man-(1-&gt;6)]-beta-D-Man-(1-&gt;4)-beta-D-GlcNAc-(1-&gt;4)-beta-D-GlcNAc)-L-asparaginyl-[protein] (N-glucan mannose isomer 8A1,2,3B1,3) + beta-D-mannose. It functions in the pathway protein modification; protein glycosylation. Inhibited by kifunensine and 1-deoxymannojirimycin, but not by swainsonine. Its function is as follows. Class I alpha-mannosidase essential for early N-glycan processing. Progressively trims alpha-1,2-linked mannose residues. Produces Man(5)GlcNAc(2) from Man(8)GlcNAc(2), but only Man(6)GlcNAc(2) from Man(9)GlcNAc(2). Has difficulty acting on the terminal mannose of the b-branch. Involved in root development and cell wall biosynthesis. The polypeptide is Mannosyl-oligosaccharide 1,2-alpha-mannosidase MNS1 (MNS1) (Arabidopsis thaliana (Mouse-ear cress)).